Here is a 248-residue protein sequence, read N- to C-terminus: Flavodoxin/ferredoxin--NADP reductase (248 aa).

An FAD-binding FR-type domain is found at 2 to 101 (ADWVTGKVTK…SEAAGFFVLD (100 aa)). D17 provides a ligand contact to NADP(+). FAD contacts are provided by residues 50–53 (RAYS), Y66, 74–76 (KLS), and T116. NADP(+) contacts are provided by residues 143–144 (AR), 173–174 (SR), R184, 214–216 (NPQ), and D220. Position 247-248 (247-248 (YW)) interacts with FAD.

It belongs to the ferredoxin--NADP reductase type 1 family. In terms of assembly, monomer. It depends on FAD as a cofactor.

The protein localises to the cytoplasm. The catalysed reaction is 2 reduced [2Fe-2S]-[ferredoxin] + NADP(+) + H(+) = 2 oxidized [2Fe-2S]-[ferredoxin] + NADPH. It catalyses the reaction reduced [flavodoxin] + NADP(+) = oxidized [flavodoxin] + NADPH + 2 H(+). In terms of biological role, transports electrons between flavodoxin or ferredoxin and NADPH. Reduces flavodoxin 1, flavodoxin 2 and ferredoxin, ferredoxin being the kinetically and thermodynamically preferred partner. Required for the activation of several enzymes such as pyruvate formate-lyase, anaerobic ribonucleotide reductase and cobalamin-dependent methionine synthase. The protein is Flavodoxin/ferredoxin--NADP reductase of Escherichia coli (strain K12).